Here is a 319-residue protein sequence, read N- to C-terminus: uncharacterized protein (319 aa).

The MPN domain occupies 29–164 (VNISSLALLK…LDAFRSVNPL (136 aa)). 3 residues coordinate Zn(2+): His111, His113, and Asp124. The short motif at 111–124 (HSHPGFGCWLSSVD) is the JAMM motif element.

This sequence belongs to the peptidase M67A family.

This is an uncharacterized protein from Caenorhabditis elegans.